The primary structure comprises 360 residues: Outer membrane protein P2 (360 aa).

Residues Met-1 to Ala-20 form the signal peptide.

This sequence belongs to the Gram-negative porin family. As to quaternary structure, homotrimer.

Its subcellular location is the cell outer membrane. In terms of biological role, forms pores that allow passive diffusion of small molecules across the outer membrane. The protein is Outer membrane protein P2 (ompP2) of Haemophilus influenzae.